We begin with the raw amino-acid sequence, 1009 residues long: Anillin-like protein 2 (1009 aa).

3 disordered regions span residues 1–29 (MYRR…DSNR), 272–295 (FGQE…QTIV), and 539–558 (GTGY…PTLV). Residues 542–557 (YSASSSGPQFTRSPTL) show a composition bias toward polar residues. Residues 626-657 (SAADKINDSKRQISKLIETIEKTRKHIQLAEI) are a coiled coil. The PH domain maps to 892–1005 (DVEYRGFLYL…WLNAINDTLF (114 aa)).

Localizes to the surface of the rachis.

Its function is as follows. Required to maintain the structure of the rachis, the central cytoplasmic core of the syncytial adult gonad. Failure to maintain the rachis leads to premature dissociation of oocytes and thereby impedes oogenesis. In Caenorhabditis elegans, this protein is Anillin-like protein 2 (ani-2).